We begin with the raw amino-acid sequence, 336 residues long: Aspartate--ammonia ligase (336 aa).

It belongs to the class-II aminoacyl-tRNA synthetase family. AsnA subfamily.

It is found in the cytoplasm. It catalyses the reaction L-aspartate + NH4(+) + ATP = L-asparagine + AMP + diphosphate + H(+). The protein operates within amino-acid biosynthesis; L-asparagine biosynthesis; L-asparagine from L-aspartate (ammonia route): step 1/1. In Clostridium perfringens (strain SM101 / Type A), this protein is Aspartate--ammonia ligase.